A 402-amino-acid polypeptide reads, in one-letter code: Zinc finger CCHC domain-containing protein 12 (402 aa).

The segment covering 268–277 (DTPDDSDEDV) has biased composition (acidic residues). Residues 268-342 (DTPDDSDEDV…PGNMRRTRKR (75 aa)) are disordered. Over residues 311 to 323 (SPNNSQFPSPCTS) the composition is skewed to polar residues. Residues 346–363 (IRCSYCGEEGHSKETCDN) form a CCHC-type zinc finger. Positions 383 to 392 (HTEERSREAP) are enriched in basic and acidic residues. The tract at residues 383–402 (HTEERSREAPVEPSDPCELQ) is disordered.

The protein belongs to the ZCCHC12 family. As to quaternary structure, interacts with SMAD1 and CREB-binding protein (CBP). Forms a protein-DNA complex through its association with SMAD1.

Its function is as follows. Transcriptional coactivator in the bone morphogenetic protein (BMP)-signaling pathway. It positively modulates BMP signaling by interacting with SMAD1 and associating with CBP in the transcription complex. It contributes to the BMP-induced enhancement of cholinergic-neuron-specific gene expression. The sequence is that of Zinc finger CCHC domain-containing protein 12 (ZCCHC12) from Bos taurus (Bovine).